The primary structure comprises 506 residues: ATP synthase subunit alpha (506 aa).

Gly170–Thr177 is a binding site for ATP.

The protein belongs to the ATPase alpha/beta chains family. As to quaternary structure, F-type ATPases have 2 components, CF(1) - the catalytic core - and CF(0) - the membrane proton channel. CF(1) has five subunits: alpha(3), beta(3), gamma(1), delta(1), epsilon(1). CF(0) has four main subunits: a(1), b(1), b'(1) and c(9-12).

The protein localises to the cellular thylakoid membrane. It catalyses the reaction ATP + H2O + 4 H(+)(in) = ADP + phosphate + 5 H(+)(out). Its function is as follows. Produces ATP from ADP in the presence of a proton gradient across the membrane. The alpha chain is a regulatory subunit. The protein is ATP synthase subunit alpha of Synechococcus sp. (strain JA-3-3Ab) (Cyanobacteria bacterium Yellowstone A-Prime).